A 515-amino-acid chain; its full sequence is SWI/SNF-related matrix-associated actin-dependent regulator of chromatin subfamily D member 1 (515 aa).

The tract at residues 1-128 (MAARAGFQSV…RNHNAKKKKM (128 aa)) is disordered. A compositionally biased stretch (gly residues) spans 14-23 (GGAGASGGAG). The segment at 43–167 (APGQGLYRSP…DQTIMRKRLD (125 aa)) is interaction with ESR1, NR1H4, NR3C1, PGR and SMARCA4. An asymmetric dimethylarginine mark is found at arginine 68 and arginine 88. Lysine 101 is covalently cross-linked (Glycyl lysine isopeptide (Lys-Gly) (interchain with G-Cter in SUMO2)). Low complexity predominate over residues 103–117 (PAPQQIKQVQQQAVQ). The interaction with SMARCC1 and SMARCC2 stretch occupies residues 168-474 (IQEALKRPIK…VMTDVVGNSE (307 aa)). The interval 180–515 (RKLRIFISNT…LEQALGIRNT (336 aa)) is necessary for GR/NR3C1-mediated remodeling and transcription from chromatin; required for GR/NR3C1 interaction with the BRG1/SMARCA4 complex in vivo. Position 203 is a phosphothreonine (threonine 203). Lysine 223 bears the N6-acetyllysine mark. Positions 290–367 (YQPPQFKLDP…PQRLHALLMP (78 aa)) constitute an SWIB/MDM2 domain. The stretch at 412 to 440 (ASQQEIATLDNKIHETIETINQLKTQREF) forms a coiled coil.

It belongs to the SMARCD family. As to quaternary structure, component of the multiprotein chromatin-remodeling complexes SWI/SNF: SWI/SNF-A (BAF), SWI/SNF-B (PBAF) and related complexes. The canonical complex contains a catalytic subunit (either SMARCA4/BRG1/BAF190A or SMARCA2/BRM/BAF190B), and at least SMARCE1, ACTL6A/BAF53, SMARCC1/BAF155, SMARCC2/BAF170, and SMARCB1/SNF5/BAF47. Other subunits specific to each of the complexes may also be present permitting several possible combinations developmentally and tissue specific. Component of the BAF complex, which includes at least actin (ACTB), ARID1A/BAF250A, ARID1B/BAF250B, SMARCA2/BRM, SMARCA4/BRG1/BAF190A, ACTL6A/BAF53, ACTL6B/BAF53B, SMARCE1/BAF57, SMARCC1/BAF155, SMARCC2/BAF170, SMARCB1/SNF5/INI1, and one or more SMARCD1/BAF60A, SMARCD2/BAF60B, or SMARCD3/BAF60C. In muscle cells, the BAF complex also contains DPF3. Component of neural progenitors-specific chromatin remodeling complex (npBAF complex) composed of at least, ARID1A/BAF250A or ARID1B/BAF250B, SMARCD1/BAF60A, SMARCD3/BAF60C, SMARCA2/BRM/BAF190B, SMARCA4/BRG1/BAF190A, SMARCB1/BAF47, SMARCC1/BAF155, SMARCE1/BAF57, SMARCC2/BAF170, PHF10/BAF45A, ACTL6A/BAF53A and actin. Component of neuron-specific chromatin remodeling complex (nBAF complex) composed of at least, ARID1A/BAF250A or ARID1B/BAF250B, SMARCD1/BAF60A, SMARCD3/BAF60C, SMARCA2/BRM/BAF190B, SMARCA4/BRG1/BAF190A, SMARCB1/BAF47, SMARCC1/BAF155, SMARCE1/BAF57, SMARCC2/BAF170, DPF1/BAF45B, DPF3/BAF45C, ACTL6B/BAF53B and actin. Component of the SWI/SNF-B (PBAF) chromatin remodeling complex, at least composed of SMARCA4/BRG1, SMARCB1/BAF47/SNF5, ACTL6A/BAF53A or ACTL6B/BAF53B, SMARCE1/BAF57, SMARCD1/BAF60A, SMARCD2/BAF60B, perhaps SMARCD3/BAF60C, SMARCC1/BAF155, SMARCC2/BAF170, PBRM1/BAF180, ARID2/BAF200 and actin (ACTB). Component of SWI/SNF (GBAF) subcomplex, which includes at least BICRA or BICRAL (mutually exclusive), BRD9, SS18, SMARCA2/BRM, SMARCA4/BRG1/BAF190A, ACTL6A/BAF53, SMARCC1/BAF155, and SMARCD1/BAF60A. Specifically interacts with the VDR heterodimer complex. Interacts with ESR1, NR3C1, NR1H4, PGR, SMARCA4, SMARCC1 and SMARCC2. Interacts with DPF2. Interacts with FOS, FOSB, FOSL1 and FOSL2.

It localises to the nucleus. Its function is as follows. Involved in transcriptional activation and repression of select genes by chromatin remodeling (alteration of DNA-nucleosome topology). Component of SWI/SNF chromatin remodeling complexes that carry out key enzymatic activities, changing chromatin structure by altering DNA-histone contacts within a nucleosome in an ATP-dependent manner. Belongs to the neural progenitors-specific chromatin remodeling complex (npBAF complex) and the neuron-specific chromatin remodeling complex (nBAF complex). During neural development a switch from a stem/progenitor to a postmitotic chromatin remodeling mechanism occurs as neurons exit the cell cycle and become committed to their adult state. The transition from proliferating neural stem/progenitor cells to postmitotic neurons requires a switch in subunit composition of the npBAF and nBAF complexes. As neural progenitors exit mitosis and differentiate into neurons, npBAF complexes which contain ACTL6A/BAF53A and PHF10/BAF45A, are exchanged for homologous alternative ACTL6B/BAF53B and DPF1/BAF45B or DPF3/BAF45C subunits in neuron-specific complexes (nBAF). The npBAF complex is essential for the self-renewal/proliferative capacity of the multipotent neural stem cells. The nBAF complex along with CREST plays a role regulating the activity of genes essential for dendrite growth. Has a strong influence on vitamin D-mediated transcriptional activity from an enhancer vitamin D receptor element (VDRE). May be a link between mammalian SWI-SNF-like chromatin remodeling complexes and the vitamin D receptor (VDR) heterodimer. Mediates critical interactions between nuclear receptors and the BRG1/SMARCA4 chromatin-remodeling complex for transactivation. Interacts with AKIRIN2. This Bos taurus (Bovine) protein is SWI/SNF-related matrix-associated actin-dependent regulator of chromatin subfamily D member 1 (SMARCD1).